Consider the following 209-residue polypeptide: T-cell surface glycoprotein CD8 beta chain (209 aa).

The N-terminal stretch at 1–21 (MRPRMWLLLSAQLAALHGNSV) is a signal peptide. One can recognise an Ig-like V-type domain in the interval 22 to 131 (LQQTPAYIMV…TLIFGTGTQL (110 aa)). The Extracellular portion of the chain corresponds to 22 to 169 (LQQTPAYIMV…ETRKGPLCSP (148 aa)). Cysteines 41 and 115 form a disulfide. An N-linked (GlcNAc...) asparagine glycan is attached at Asn101. The helical transmembrane segment at 170–190 (ITLSLLVAGILVLLVSLGVAI) threads the bilayer. The Cytoplasmic portion of the chain corresponds to 191-209 (HLYCRQRRARLRFMKQFYK).

Forms disulfide-linked heterodimers with CD8A at the cell surface. Interacts with CD3D; this interaction couples TCR-CD3 with CD8. Interacts with LCK. In terms of processing, phosphorylated as a consequence of T-cell activation. Post-translationally, palmitoylated at the cytoplasmic tail and thereby targets the heterodimer CD8A/CD8B to lipid rafts unlike CD8A homodimers.

The protein resides in the cell membrane. Integral membrane glycoprotein that plays an essential role in the immune response and serves multiple functions in responses against both external and internal offenses. In T-cells, functions primarily as a coreceptor for MHC class I molecule:peptide complex. The antigens presented by class I peptides are derived from cytosolic proteins while class II derived from extracellular proteins. Interacts simultaneously with the T-cell receptor (TCR) and the MHC class I proteins presented by antigen presenting cells (APCs). In turn, recruits the Src kinase LCK to the vicinity of the TCR-CD3 complex. A palmitoylation site in the cytoplasmic tail of CD8B chain contributes to partitioning of CD8 into the plasma membrane lipid rafts where signaling proteins are enriched. Once LCK recruited, it initiates different intracellular signaling pathways by phosphorylating various substrates ultimately leading to lymphokine production, motility, adhesion and activation of cytotoxic T-lymphocytes (CTLs). Additionally, plays a critical role in thymic selection of CD8+ T-cells. The sequence is that of T-cell surface glycoprotein CD8 beta chain (CD8B) from Saimiri sciureus (Common squirrel monkey).